The sequence spans 218 residues: Insulin-induced gene 2 protein (218 aa).

At 1–21 the chain is on the cytoplasmic side; it reads MGETDNAPRGPPSFLPHKMNL. Residues 22–44 traverse the membrane as a helical segment; that stretch reads LLRGLLLFLIGVFLALVLNLLQV. The Lumenal portion of the chain corresponds to 45–63; sequence QRNVTLFPPDVLSSLFSSA. Residues 64-81 form a helical membrane-spanning segment; it reads WWVPLCCGTAAAAIGLLY. Over 82–96 the chain is Cytoplasmic; it reads PCIDRHLGEPHKFKR. A helical membrane pass occupies residues 97 to 119; that stretch reads EWSSVMRCVAVFVGINHASAKVD. Over 120-122 the chain is Lumenal; it reads FAN. The chain crosses the membrane as a helical span at residues 123 to 141; sequence NTQLSLTLAALSIGLWWTF. Topologically, residues 142–146 are cytoplasmic; that stretch reads DRSRS. Residues 147 to 168 form a helical membrane-spanning segment; sequence GLGLGIGISFFATVVSQLLVYN. Residues 169-182 are Lumenal-facing; the sequence is GVYEYTAPDFLYVR. The helical transmembrane segment at 183–200 threads the bilayer; that stretch reads SWLPCIFFAGGITMGNIG. At 201-218 the chain is on the cytoplasmic side; that stretch reads RQLEMYERLALVEKSHRD. The short motif at 212 to 218 is the KxHxx element; that stretch reads VEKSHRD.

Belongs to the INSIG family. As to quaternary structure, interacts with scap; interaction is direct and only takes place in the presence of sterols; it prevents interaction between scap and the coat protein complex II (COPII). Associates with the SCAP-SREBP complex; association is mediated via its interaction with scap and only takes place in the presence of sterols.

The protein resides in the endoplasmic reticulum membrane. In terms of biological role, oxysterol-binding protein that mediates feedback control of cholesterol synthesis by controlling both endoplasmic reticulum to Golgi transport of scap and degradation of hmgcr. Acts as a negative regulator of cholesterol biosynthesis by mediating the retention of the SCAP-SREBP complex in the endoplasmic reticulum, thereby blocking the processing of sterol regulatory element-binding proteins (SREBPs). Binds oxysterol, including 22-hydroxycholesterol, 24-hydroxycholesterol, 25-hydroxycholesterol and 27-hydroxycholesterol, regulating interaction with scap and retention of the SCAP-SREBP complex in the endoplasmic reticulum. In presence of oxysterol, interacts with scap, retaining the SCAP-SREBP complex in the endoplasmic reticulum, thereby preventing scap from escorting SREBPs to the Golgi. Sterol deprivation reduce oxysterol-binding, disrupting the interaction between insig2 and scap, thereby promoting Golgi transport of the SCAP-SREBP complex, followed by processing and nuclear translocation of SREBPs. Also regulates cholesterol synthesis by regulating degradation of hmgcr. This chain is Insulin-induced gene 2 protein, found in Xenopus tropicalis (Western clawed frog).